The following is a 355-amino-acid chain: 5-formaminoimidazole-4-carboxamide-1-(beta)-D-ribofuranosyl 5'-monophosphate synthetase (355 aa).

Residues His-27 and Ser-94 each contribute to the 5-amino-1-(5-phospho-beta-D-ribosyl)imidazole-4-carboxamide site. An ATP-grasp domain is found at 101 to 332 (TESFAELAVP…YSDMIEENLS (232 aa)). ATP-binding positions include 144 to 195 (PEKI…TRYY) and Glu-225. Asn-254 serves as a coordination point for 5-amino-1-(5-phospho-beta-D-ribosyl)imidazole-4-carboxamide. The Mg(2+) site is built by Glu-292 and Glu-305.

This sequence belongs to the phosphohexose mutase family. Mg(2+) is required as a cofactor. It depends on Mn(2+) as a cofactor.

It catalyses the reaction 5-amino-1-(5-phospho-beta-D-ribosyl)imidazole-4-carboxamide + formate + ATP = 5-formamido-1-(5-phospho-D-ribosyl)imidazole-4-carboxamide + ADP + phosphate. It participates in purine metabolism; IMP biosynthesis via de novo pathway; 5-formamido-1-(5-phospho-D-ribosyl)imidazole-4-carboxamide from 5-amino-1-(5-phospho-D-ribosyl)imidazole-4-carboxamide (formate route): step 1/1. In terms of biological role, catalyzes the ATP- and formate-dependent formylation of 5-aminoimidazole-4-carboxamide-1-beta-d-ribofuranosyl 5'-monophosphate (AICAR) to 5-formaminoimidazole-4-carboxamide-1-beta-d-ribofuranosyl 5'-monophosphate (FAICAR) in the absence of folates. The protein is 5-formaminoimidazole-4-carboxamide-1-(beta)-D-ribofuranosyl 5'-monophosphate synthetase of Methanococcoides burtonii (strain DSM 6242 / NBRC 107633 / OCM 468 / ACE-M).